Reading from the N-terminus, the 630-residue chain is DNA mismatch repair protein MutL (630 aa).

Disordered stretches follow at residues 361–386 (VLSS…APAE) and 407–431 (FERK…GQAE). The span at 407 to 421 (FERKQEEEVGEERCS) shows a compositional bias: basic and acidic residues.

It belongs to the DNA mismatch repair MutL/HexB family.

Functionally, this protein is involved in the repair of mismatches in DNA. It is required for dam-dependent methyl-directed DNA mismatch repair. May act as a 'molecular matchmaker', a protein that promotes the formation of a stable complex between two or more DNA-binding proteins in an ATP-dependent manner without itself being part of a final effector complex. The polypeptide is DNA mismatch repair protein MutL (Geobacillus kaustophilus (strain HTA426)).